The sequence spans 209 residues: NAD-reducing hydrogenase HoxS subunit delta (209 aa).

In terms of assembly, tetramer of an alpha and a gamma subunits (flavin-containing dimer), and a delta and a nickel-containing beta subunits (hydrogenase dimer). The cofactor is [4Fe-4S] cluster. [3Fe-4S] cluster serves as cofactor. It depends on [2Fe-2S] cluster as a cofactor. Requires FMN as cofactor. Ni(2+) is required as a cofactor.

It is found in the cytoplasm. The enzyme catalyses H2 + NAD(+) = NADH + H(+). This chain is NAD-reducing hydrogenase HoxS subunit delta (hoxY), found in Cupriavidus necator (strain ATCC 17699 / DSM 428 / KCTC 22496 / NCIMB 10442 / H16 / Stanier 337) (Ralstonia eutropha).